Consider the following 348-residue polypeptide: UPF0283 membrane protein PMI1371 (348 aa).

A run of 2 helical transmembrane segments spans residues 69–89 and 99–119; these read LITVASTILGVSVIAQAGQWI and IALGAASAGGLIVIAGMGSVI.

Belongs to the UPF0283 family.

It localises to the cell inner membrane. This is UPF0283 membrane protein PMI1371 from Proteus mirabilis (strain HI4320).